A 650-amino-acid chain; its full sequence is 1-deoxy-D-xylulose-5-phosphate synthase (650 aa).

Residues His87 and 128-130 (GHS) contribute to the thiamine diphosphate site. Asp159 is a Mg(2+) binding site. Thiamine diphosphate contacts are provided by residues 160–161 (GS), Asn188, Tyr299, and Glu383. Position 188 (Asn188) interacts with Mg(2+).

The protein belongs to the transketolase family. DXPS subfamily. Homodimer. It depends on Mg(2+) as a cofactor. Requires thiamine diphosphate as cofactor.

The catalysed reaction is D-glyceraldehyde 3-phosphate + pyruvate + H(+) = 1-deoxy-D-xylulose 5-phosphate + CO2. It participates in metabolic intermediate biosynthesis; 1-deoxy-D-xylulose 5-phosphate biosynthesis; 1-deoxy-D-xylulose 5-phosphate from D-glyceraldehyde 3-phosphate and pyruvate: step 1/1. Catalyzes the acyloin condensation reaction between C atoms 2 and 3 of pyruvate and glyceraldehyde 3-phosphate to yield 1-deoxy-D-xylulose-5-phosphate (DXP). The chain is 1-deoxy-D-xylulose-5-phosphate synthase from Syntrophus aciditrophicus (strain SB).